The following is a 378-amino-acid chain: Protein RecA (378 aa).

79–86 contacts ATP; it reads GPESSGKT.

It belongs to the RecA family.

The protein localises to the cytoplasm. In terms of biological role, can catalyze the hydrolysis of ATP in the presence of single-stranded DNA, the ATP-dependent uptake of single-stranded DNA by duplex DNA, and the ATP-dependent hybridization of homologous single-stranded DNAs. It interacts with LexA causing its activation and leading to its autocatalytic cleavage. The protein is Protein RecA of Streptococcus pyogenes serotype M1.